A 392-amino-acid polypeptide reads, in one-letter code: GTPase Obg (392 aa).

The Obg domain occupies 1 to 159 (MKFIDEALIR…RDLQLELMLL (159 aa)). The region spanning 160-333 (ADVGMLGLPN…LCRDIMDFIE (174 aa)) is the OBG-type G domain. GTP-binding positions include 166–173 (GLPNAGKS), 191–195 (FTTLV), 213–216 (DIPG), 283–286 (NKID), and 314–316 (SAA). Residues S173 and T193 each coordinate Mg(2+). The disordered stretch occupies residues 361 to 392 (SEQVFTEDDQEEDDWDDWSEDDEEGVEIIYKP). Acidic residues predominate over residues 365–386 (FTEDDQEEDDWDDWSEDDEEGV).

The protein belongs to the TRAFAC class OBG-HflX-like GTPase superfamily. OBG GTPase family. As to quaternary structure, monomer. Mg(2+) is required as a cofactor.

It localises to the cytoplasm. Functionally, an essential GTPase which binds GTP, GDP and possibly (p)ppGpp with moderate affinity, with high nucleotide exchange rates and a fairly low GTP hydrolysis rate. Plays a role in control of the cell cycle, stress response, ribosome biogenesis and in those bacteria that undergo differentiation, in morphogenesis control. This is GTPase Obg from Histophilus somni (strain 2336) (Haemophilus somnus).